Consider the following 182-residue polypeptide: MKGWGWLALLLGVLLGTAWARRSQDLHCGACRALVDELEWEIARVDPKKTIQMGSFRINPDGSQSVVEVPYARSEAHLTELLEEVCDRMKEYGEQIDPSTHRKNYVRVVSRNGESSELDLQGIRIDSDISGTLKFACESIVEEYEDELIEFFSREADNVKDKLCSKRTDLCDHALHRSHDEL.

Residues Met-1–Ala-20 form the signal peptide. Positions Gln-24–Leu-175 constitute a Saposin B-type domain. Intrachain disulfides connect Cys-28–Cys-171, Cys-31–Cys-164, and Cys-86–Cys-137. Ser-115 is subject to Phosphoserine. Positions His-179–Leu-182 match the Prevents secretion from ER motif.

This sequence belongs to the canopy family. As to quaternary structure, interacts with MYLIP/MIR.

The protein resides in the endoplasmic reticulum. In terms of biological role, positive regulator of neurite outgrowth by stabilizing myosin regulatory light chain (MRLC). It prevents MIR-mediated MRLC ubiquitination and its subsequent proteasomal degradation. This Mus musculus (Mouse) protein is Protein canopy homolog 2 (Cnpy2).